We begin with the raw amino-acid sequence, 75 residues long: UPF0181 protein ETA_15280 (75 aa).

Belongs to the UPF0181 family.

This is UPF0181 protein ETA_15280 from Erwinia tasmaniensis (strain DSM 17950 / CFBP 7177 / CIP 109463 / NCPPB 4357 / Et1/99).